The following is a 182-amino-acid chain: Thioredoxin X, chloroplastic (182 aa).

The N-terminal 67 residues, 1–67, are a transit peptide targeting the chloroplast; the sequence is MDSIVSSSTI…TRKSSSSVIR (67 aa). The region spanning 68-177 is the Thioredoxin domain; that stretch reads CGGIKEIGES…LKEYIDGLLN (110 aa). Active-site nucleophile residues include C99 and C102. C99 and C102 are joined by a disulfide.

This sequence belongs to the thioredoxin family. In terms of tissue distribution, predominantly expressed in leaves.

Its subcellular location is the plastid. The protein localises to the chloroplast stroma. Functionally, probable thiol-disulfide oxidoreductase that may participate in various redox reactions. This is Thioredoxin X, chloroplastic (ATHX) from Arabidopsis thaliana (Mouse-ear cress).